We begin with the raw amino-acid sequence, 950 residues long: Serine/threonine-protein kinase 10-A (950 aa).

The 259-residue stretch at 36-294 (WEIIGELGDG…AAQLLEHPFV (259 aa)) folds into the Protein kinase domain. ATP is bound by residues 42–50 (LGDGAFGKV) and K65. The active-site Proton acceptor is the D157. Residues 319-331 (EEQGEAEEEEDSD) show a composition bias toward acidic residues. The segment at 319-478 (EEQGEAEEEE…DSGSNSASES (160 aa)) is disordered. Basic and acidic residues predominate over residues 347–356 (EIGKDIEREQ). Over residues 365–382 (SATSPQKTDSQADNYSQR) the composition is skewed to polar residues. Positions 416 to 432 (EPKRNSTAESYRGEEHS) are enriched in basic and acidic residues. Low complexity predominate over residues 433–445 (SASSQRQRSAQSA). Positions 452-463 (SFDSPTRYFTNW) are enriched in polar residues. 3 positions are modified to phosphoserine; by PLK1: S482, S486, and S490. Residues 634 to 786 (IKFLEQLKLR…QLRLRQQQEK (153 aa)) adopt a coiled-coil conformation.

It belongs to the protein kinase superfamily. STE Ser/Thr protein kinase family. STE20 subfamily. In terms of assembly, homodimer. Autophosphorylates. Phosphorylated by plk1/plx1, suggesting the existence of a feedback loop with plk1/plx1. activation of the protein.

The protein resides in the cell membrane. It catalyses the reaction L-seryl-[protein] + ATP = O-phospho-L-seryl-[protein] + ADP + H(+). The catalysed reaction is L-threonyl-[protein] + ATP = O-phospho-L-threonyl-[protein] + ADP + H(+). In terms of biological role, may act as a polo kinase kinase by mediating phosphorylation of plk1/plx1 and subsequent activation of plk1/plx1 during oocyte maturation. In Xenopus laevis (African clawed frog), this protein is Serine/threonine-protein kinase 10-A (stk10-a).